Reading from the N-terminus, the 216-residue chain is Kynurenine formamidase (216 aa).

Phe-21 contributes to the substrate binding site. Zn(2+) contacts are provided by His-51, His-55, and Asp-57. The active-site Proton donor/acceptor is His-61. His-167 and Glu-179 together coordinate Zn(2+).

This sequence belongs to the Cyclase 1 superfamily. KynB family. Homodimer. Requires Zn(2+) as cofactor.

It carries out the reaction N-formyl-L-kynurenine + H2O = L-kynurenine + formate + H(+). It functions in the pathway amino-acid degradation; L-tryptophan degradation via kynurenine pathway; L-kynurenine from L-tryptophan: step 2/2. In terms of biological role, catalyzes the hydrolysis of N-formyl-L-kynurenine to L-kynurenine, the second step in the kynurenine pathway of tryptophan degradation. The sequence is that of Kynurenine formamidase from Paracidovorax citrulli (strain AAC00-1) (Acidovorax citrulli).